The sequence spans 332 residues: 4-hydroxy-3-methylbut-2-enyl diphosphate reductase (332 aa).

C13 contacts [4Fe-4S] cluster. The (2E)-4-hydroxy-3-methylbut-2-enyl diphosphate site is built by H41 and H75. Residues H41 and H75 each contribute to the dimethylallyl diphosphate site. H41 and H75 together coordinate isopentenyl diphosphate. [4Fe-4S] cluster is bound at residue C97. Residue H125 participates in (2E)-4-hydroxy-3-methylbut-2-enyl diphosphate binding. H125 serves as a coordination point for dimethylallyl diphosphate. H125 contacts isopentenyl diphosphate. E127 (proton donor) is an active-site residue. T168 contacts (2E)-4-hydroxy-3-methylbut-2-enyl diphosphate. C229 contacts [4Fe-4S] cluster. The (2E)-4-hydroxy-3-methylbut-2-enyl diphosphate site is built by S257, S258, N259, and S306. Dimethylallyl diphosphate is bound by residues S257, S258, N259, and S306. Isopentenyl diphosphate is bound by residues S257, S258, N259, and S306.

Belongs to the IspH family. Requires [4Fe-4S] cluster as cofactor.

The catalysed reaction is isopentenyl diphosphate + 2 oxidized [2Fe-2S]-[ferredoxin] + H2O = (2E)-4-hydroxy-3-methylbut-2-enyl diphosphate + 2 reduced [2Fe-2S]-[ferredoxin] + 2 H(+). It carries out the reaction dimethylallyl diphosphate + 2 oxidized [2Fe-2S]-[ferredoxin] + H2O = (2E)-4-hydroxy-3-methylbut-2-enyl diphosphate + 2 reduced [2Fe-2S]-[ferredoxin] + 2 H(+). It participates in isoprenoid biosynthesis; dimethylallyl diphosphate biosynthesis; dimethylallyl diphosphate from (2E)-4-hydroxy-3-methylbutenyl diphosphate: step 1/1. The protein operates within isoprenoid biosynthesis; isopentenyl diphosphate biosynthesis via DXP pathway; isopentenyl diphosphate from 1-deoxy-D-xylulose 5-phosphate: step 6/6. In terms of biological role, catalyzes the conversion of 1-hydroxy-2-methyl-2-(E)-butenyl 4-diphosphate (HMBPP) into a mixture of isopentenyl diphosphate (IPP) and dimethylallyl diphosphate (DMAPP). Acts in the terminal step of the DOXP/MEP pathway for isoprenoid precursor biosynthesis. The chain is 4-hydroxy-3-methylbut-2-enyl diphosphate reductase from Chlorobaculum parvum (strain DSM 263 / NCIMB 8327) (Chlorobium vibrioforme subsp. thiosulfatophilum).